Here is a 153-residue protein sequence, read N- to C-terminus: S-ribosylhomocysteine lyase (153 aa).

Fe cation contacts are provided by His-57, His-61, and Cys-124.

The protein belongs to the LuxS family. As to quaternary structure, homodimer. Fe cation serves as cofactor.

It carries out the reaction S-(5-deoxy-D-ribos-5-yl)-L-homocysteine = (S)-4,5-dihydroxypentane-2,3-dione + L-homocysteine. Functionally, involved in the synthesis of autoinducer 2 (AI-2) which is secreted by bacteria and is used to communicate both the cell density and the metabolic potential of the environment. The regulation of gene expression in response to changes in cell density is called quorum sensing. Catalyzes the transformation of S-ribosylhomocysteine (RHC) to homocysteine (HC) and 4,5-dihydroxy-2,3-pentadione (DPD). The chain is S-ribosylhomocysteine lyase from Oceanobacillus iheyensis (strain DSM 14371 / CIP 107618 / JCM 11309 / KCTC 3954 / HTE831).